Reading from the N-terminus, the 191-residue chain is uncharacterized protein (191 aa).

Helical transmembrane passes span 24-44 (IVRG…GASG), 51-71 (IIAA…LGAF), 114-134 (LIDG…FFLF), 139-159 (ALYV…VFIG), and 167-187 (IISG…CFMI).

It localises to the cell membrane. This is an uncharacterized protein from Methanocaldococcus jannaschii (strain ATCC 43067 / DSM 2661 / JAL-1 / JCM 10045 / NBRC 100440) (Methanococcus jannaschii).